Here is a 152-residue protein sequence, read N- to C-terminus: Transcriptional regulator MraZ (152 aa).

2 consecutive SpoVT-AbrB domains span residues 5 to 52 (ATLV…TLPE) and 81 to 124 (ASEC…DEQV).

It belongs to the MraZ family. In terms of assembly, forms oligomers.

The protein resides in the cytoplasm. Its subcellular location is the nucleoid. In terms of biological role, negatively regulates its own expression and that of the subsequent genes in the proximal part of the division and cell wall (dcw) gene cluster. Acts by binding directly to DNA. May also regulate the expression of genes outside the dcw cluster. This chain is Transcriptional regulator MraZ, found in Proteus mirabilis (strain HI4320).